A 193-amino-acid polypeptide reads, in one-letter code: Fe/S biogenesis protein NfuA (193 aa).

The [4Fe-4S] cluster site is built by Cys-151 and Cys-154.

The protein belongs to the NfuA family. Homodimer. The cofactor is [4Fe-4S] cluster.

Functionally, involved in iron-sulfur cluster biogenesis. Binds a 4Fe-4S cluster, can transfer this cluster to apoproteins, and thereby intervenes in the maturation of Fe/S proteins. Could also act as a scaffold/chaperone for damaged Fe/S proteins. The sequence is that of Fe/S biogenesis protein NfuA from Buchnera aphidicola subsp. Cinara cedri (strain Cc).